Reading from the N-terminus, the 106-residue chain is uncharacterized protein (106 aa).

Residues 78-98 form a helical membrane-spanning segment; it reads LAITGYVVSIPIVLPILIIFI.

Its subcellular location is the membrane. This is an uncharacterized protein from Haemophilus influenzae (strain ATCC 51907 / DSM 11121 / KW20 / Rd).